Here is a 329-residue protein sequence, read N- to C-terminus: MQGSVTEFLKPRLVDIEQVNPTRAKVTLEPLERGFGHTLGNALRRILLSSMPGCAVTEVEIDGVLHEYSSKEGVQEDILEILLNLKGLAVTIEGKDEAMLTLSKSGTGPVTAADITHDGDVTIMNPDHVICHLTGNNDISMRIRVERGRGYVPASARAQTEDDDRPIGRLLVDASFSPVARIAYNVEAARVEQRTDLDKLVIDMTTNGTIDPEEAIRRSATILAEQLDAFVELRDVTEPEQKEEKPEFDPILLRPVDDLELTVRSANCLKAEAIHYIGDLVQRTEVELLKTPNLGKKSLTEIKDVLASRGLSLGMRLENWPPASLVDDL.

The segment at Met-1–Arg-234 is alpha N-terminal domain (alpha-NTD). The segment at Phe-248–Leu-329 is alpha C-terminal domain (alpha-CTD).

The protein belongs to the RNA polymerase alpha chain family. Homodimer. The RNAP catalytic core consists of 2 alpha, 1 beta, 1 beta' and 1 omega subunit. When a sigma factor is associated with the core the holoenzyme is formed, which can initiate transcription.

It carries out the reaction RNA(n) + a ribonucleoside 5'-triphosphate = RNA(n+1) + diphosphate. In terms of biological role, DNA-dependent RNA polymerase catalyzes the transcription of DNA into RNA using the four ribonucleoside triphosphates as substrates. The sequence is that of DNA-directed RNA polymerase subunit alpha from Shewanella denitrificans (strain OS217 / ATCC BAA-1090 / DSM 15013).